The chain runs to 307 residues: MFNGEPGPASAGASRNVVRSSSISGEICGSQQAGGGAGTTTAKKRRSSLGAKMVAIVGLTQWSKSTLQLPQPEGATKKLRSNIRRSTETGIAVEMRSRVTRQGSRESTDGSTNSNSSEGTFIFPTRLGAESQFSDFLDGLGPAQIVGRQTLATPPMGDVHIAIMDRSGQLEVEVIEARGLTPKPGSKSLPATYIKAYLLENGACVAKKKTKVAKKTCDPLYQQALLFDEGPQGKVLQVIVWGDYGRMDHKCFMGMAQIMLDELDLSAVVTGWYKFFPTSSVADSTLGSLTRRLSQSSLESATSPSCS.

Residues 86-120 form a disordered region; it reads STETGIAVEMRSRVTRQGSRESTDGSTNSNSSEGT. Over residues 109 to 119 the composition is skewed to polar residues; sequence DGSTNSNSSEG. In terms of domain architecture, C2 spans 155 to 273; sequence PMGDVHIAIM…DLSAVVTGWY (119 aa). 2 positions are modified to phosphoserine: S294 and S297.

As to quaternary structure, binds PPFIA3. Does not bind RAB3. Expressed exclusively in brain with significant levels in cortex, cerebellum and olfactory bulb. Detected at lower level in hippocampus.

The protein localises to the synapse. Its function is as follows. Regulates synaptic membrane exocytosis. The protein is Regulating synaptic membrane exocytosis protein 3 (Rims3) of Rattus norvegicus (Rat).